We begin with the raw amino-acid sequence, 1395 residues long: G2/mitotic-specific cyclin-B3 (1395 aa).

Residues 1-59 (MLLPLPPQSSKPVPKKSQSSKIVPSHHDPSEKTGENCQTKISPSSLQESPSSLQGALKK) form a disordered region. Residues 10–23 (SKPVPKKSQSSKIV) are compositionally biased toward low complexity. Residues 25–34 (SHHDPSEKTG) show a composition bias toward basic and acidic residues. Residues 42-54 (SPSSLQESPSSLQ) are compositionally biased toward low complexity. A D-box motif is present at residues 60 to 68 (RSAFEDLTN). Disordered regions lie at residues 418-464 (LSIK…PTEE) and 1074-1122 (ATMT…DSSD). Residues 419 to 431 (SIKEKPSTEKESF) are compositionally biased toward basic and acidic residues. A compositionally biased stretch (low complexity) spans 1082-1093 (SRTTTESSACES).

It belongs to the cyclin family. Cyclin AB subfamily. Interacts with CDK2 kinase. Post-translationally, ubiquitinated. Ubiquitination leads to its degradation during anaphase entry, after degradation of CCNB1. In terms of tissue distribution, testis specific. In testis, it is expressed in developing germ cells, but not in Leydig cells. Weakly or not expressed in other tissues.

The protein localises to the nucleus. Functionally, cyclins are positive regulatory subunits of the cyclin-dependent kinases (CDKs), and thereby play an essential role in the control of the cell cycle, notably via their destruction during cell division. Its tissue specificity suggest that it may be required during early meiotic prophase I. The polypeptide is G2/mitotic-specific cyclin-B3 (CCNB3) (Homo sapiens (Human)).